A 322-amino-acid polypeptide reads, in one-letter code: Pantothenate kinase (322 aa).

Residue G104–S111 participates in ATP binding.

It belongs to the prokaryotic pantothenate kinase family.

Its subcellular location is the cytoplasm. It catalyses the reaction (R)-pantothenate + ATP = (R)-4'-phosphopantothenate + ADP + H(+). Its pathway is cofactor biosynthesis; coenzyme A biosynthesis; CoA from (R)-pantothenate: step 1/5. The chain is Pantothenate kinase from Leifsonia xyli subsp. xyli (strain CTCB07).